The following is a 241-amino-acid chain: Tetraspanin-1 (241 aa).

3 helical membrane passes run 12–32 (ILFNLLIFLCGAALLAVGIWV), 53–73 (FVNVGYFLIAAGAVLFILGFL), and 89–109 (FFSILLIIFIAEIAGAVVALV). The N-linked (GlcNAc...) asparagine glycan is linked to asparagine 154. The helical transmembrane segment at 212–232 (AVTVGGVAVGVAALELAAMVV) threads the bilayer.

Belongs to the tetraspanin (TM4SF) family. As to quaternary structure, interacts with SLC19A2. Interacts with NTRK1/TRKA.

Its subcellular location is the cell membrane. The protein localises to the lysosome membrane. Its function is as follows. Structural component of specialized membrane microdomains known as tetraspanin-enriched microdomains (TERMs), which act as platforms for receptor clustering and signaling. Participates thereby in diverse biological functions such as cell signal transduction, adhesion, migration and protein trafficking. Regulates neuronal differentiation in response to NGF by facilitating NGF-mediated activation of NTRK1/TRKA receptor tyrosine kinase and subsequent downstream signaling pathways. Plays a role in the inhibition of TNFalpha-induced apoptosis. Mechanistically, inhibits the NF-kappa-B signaling pathway by blocking phosphorylation of CHUK. Also promotes the stability of the thiamine transporter 1/SLC19A2 in intestinal epithelial cells leading to an increase of thiamine uptake process. This is Tetraspanin-1 (Tspan1) from Rattus norvegicus (Rat).